We begin with the raw amino-acid sequence, 315 residues long: Ectopic P granules protein 4 (315 aa).

6 helical membrane-spanning segments follow: residues 84-104 (IGFLVLWQVCILILGLFFSFF), 113-133 (IGYILIIPIFFASRIIQALWF), 146-166 (LPPPPVVPFSSMLAGTLISAL), 190-210 (IVYLHMALLNSMYCFDYFFDG), 221-241 (IFESHWPYFLGFGTPLALACS), and 242-262 (ISSNMFVNSVIFALLFPFFII).

Belongs to the EI24 family. As to expression, expressed in pharyngeal and body wall muscles and intestine cells.

The protein localises to the cytoplasm. Its subcellular location is the membrane. Involved in autophagy. Thought to act in autophagasome and omegasome formation. The protein is Ectopic P granules protein 4 of Caenorhabditis elegans.